Here is a 375-residue protein sequence, read N- to C-terminus: Mitochondrial phosphate carrier protein 3, mitochondrial (375 aa).

The chain crosses the membrane as a helical span at residues 76-96 (AFYAACTFGGILSCGLTHMTV). Solcar repeat units follow at residues 76-160 (AFYA…FKKT), 173-257 (YKTL…IVEM), and 274-353 (LQLG…FKVF). The Mitochondrial matrix segment spans residues 97–134 (TPLDLVKCNMQIDPAKYKSISSGFGILLKEQGVKGFFR). Residues 135–154 (GWVPTLLGYSAQGACKFGFY) traverse the membrane as a helical segment. The Mitochondrial intermembrane portion of the chain corresponds to 155-175 (EYFKKTYSDLAGPEYTAKYKT). Residues 176–196 (LIYLAGSASAEIIADIALCPF) traverse the membrane as a helical segment. Over 197–231 (EAVKVRVQTQPGFARGMSDGFPKFIKSEGYGGLYK) the chain is Mitochondrial matrix. Residues 232–251 (GLAPLWGRQIPYTMMKFASF) form a helical membrane-spanning segment. Residues 252–272 (ETIVEMIYKYAIPNPKSECSK) are Mitochondrial intermembrane-facing. The helical transmembrane segment at 273-293 (GLQLGVSFAGGYVAGVFCAIV) threads the bilayer. Topologically, residues 294–332 (SHPADNLVSFLNNAKGATVGDAVKKIGMVGLFTRGLPLR) are mitochondrial matrix. The chain crosses the membrane as a helical span at residues 333 to 353 (IVMIGTLTGAQWGLYDAFKVF). Over 354-375 (VGLPTTGGVAPAPAIAATEAKA) the chain is Mitochondrial intermembrane.

Belongs to the mitochondrial carrier (TC 2.A.29) family. As to expression, expressed in stems, leaves and flowers. Strong expression in vascular tissues.

It is found in the mitochondrion inner membrane. In terms of biological role, transport of phosphate groups from the cytosol to the mitochondrial matrix. Mediates salt stress tolerance through an ATP-dependent pathway and via modulation of the gibberellin metabolism. The polypeptide is Mitochondrial phosphate carrier protein 3, mitochondrial (MPT3) (Arabidopsis thaliana (Mouse-ear cress)).